We begin with the raw amino-acid sequence, 519 residues long: Glucoamylase GLA1 (519 aa).

An N-terminal signal peptide occupies residues 1-27; it reads MRFGVLISVFVAIVSALPLQEGPLNKR. N115 and N127 each carry an N-linked (GlcNAc...) asparagine glycan. Residue W166 coordinates substrate. N-linked (GlcNAc...) asparagine glycosylation occurs at N205. The Proton acceptor role is filled by D234. Residue E237 is the Proton donor of the active site.

It belongs to the glycosyl hydrolase 15 family.

It carries out the reaction Hydrolysis of terminal (1-&gt;4)-linked alpha-D-glucose residues successively from non-reducing ends of the chains with release of beta-D-glucose.. The sequence is that of Glucoamylase GLA1 (GLA1) from Saccharomycopsis fibuligera (Yeast).